Here is a 905-residue protein sequence, read N- to C-terminus: Probable cation-transporting ATPase F (905 aa).

3 consecutive transmembrane segments (helical) span residues 84 to 104 (EFVD…VGFI), 248 to 268 (FSKF…GVGL), and 283 to 303 (ALAV…TLAI). The 4-aspartylphosphate intermediate role is filled by D333. Mg(2+) is bound by residues D643 and D647. Transmembrane regions (helical) follow at residues 716-736 (ILAA…ILWI), 738-758 (MTTA…AGIM), 778-798 (TLLV…WELD), 808-828 (TAAL…CRSL), 842-862 (WIIL…YLPA), and 872-892 (IDIG…IVVA).

The protein belongs to the cation transport ATPase (P-type) (TC 3.A.3) family. Type IIA subfamily.

It localises to the cell membrane. The enzyme catalyses ATP + H2O = ADP + phosphate + H(+). This is Probable cation-transporting ATPase F (ctpF) from Mycobacterium bovis (strain ATCC BAA-935 / AF2122/97).